We begin with the raw amino-acid sequence, 450 residues long: Alpha-2B adrenergic receptor (450 aa).

Over 1-12 (MDHQDPYSVQAT) the chain is Extracellular. The chain crosses the membrane as a helical span at residues 13–38 (AAIAAAITFLILFTIFGNALVILAVL). At 39–48 (TSRSLRAPQN) the chain is on the cytoplasmic side. A helical transmembrane segment spans residues 49–69 (LFLVSLAAADILVATLIIPFS). Residues 70-86 (LANELLGYWYFRRTWCE) lie on the Extracellular side of the membrane. A disulfide bridge connects residues Cys-85 and Cys-164. Residues 87–107 (VYLALDVLFCTSSIVHLCAIS) form a helical membrane-spanning segment. Residues 108 to 128 (LDRYWAVSRALEYNSKRTPRR) lie on the Cytoplasmic side of the membrane. Residues 129–149 (IKCIILTVWLIAAVISLPPLI) form a helical membrane-spanning segment. Over 150-172 (YKGDQGPQPRGRPQCKLNQEAWY) the chain is Extracellular. A helical transmembrane segment spans residues 173 to 193 (ILASSIGSFFAPCLIMILVYL). Topologically, residues 194 to 368 (RIYLIAKRSN…RRAQLTREKR (175 aa)) are cytoplasmic. Disordered stretches follow at residues 204-229 (RRGPRAKGGPGQGESKQPRPDHGGAL) and 241-329 (ASAR…PLQQ). Residues 246–256 (VNGHSKSTGEK) are compositionally biased toward basic and acidic residues. The segment covering 293–311 (PEDEAEEEEEEEEEEEECE) has biased composition (acidic residues). Residues 312–326 (PQAVPVSPASACSPP) are compositionally biased toward low complexity. The helical transmembrane segment at 369-389 (FTFVLAVVIGVFVLCWFPFFF) threads the bilayer. At 390 to 405 (SYSLGAICPKHCKVPH) the chain is on the extracellular side. A helical transmembrane segment spans residues 406 to 426 (GLFQFFFWIGYCNSSLNPVIY). Over 427–450 (TIFNQDFRRAFRRILCRPWTQTAW) the chain is Cytoplasmic. Cys-442 is lipidated: S-palmitoyl cysteine.

It belongs to the G-protein coupled receptor 1 family. Adrenergic receptor subfamily. ADRA2B sub-subfamily. Interacts with RAB26. Interacts with PPP1R9B. Interacts with GGA1, GGA2 and GGA3.

It localises to the cell membrane. Alpha-2 adrenergic receptors mediate the catecholamine-induced inhibition of adenylate cyclase through the action of G proteins. The rank order of potency for agonists of this receptor is clonidine &gt; norepinephrine &gt; epinephrine = oxymetazoline &gt; dopamine &gt; p-tyramine = phenylephrine &gt; serotonin &gt; p-synephrine / p-octopamine. For antagonists, the rank order is yohimbine &gt; chlorpromazine &gt; phentolamine &gt; mianserine &gt; spiperone &gt; prazosin &gt; alprenolol &gt; propanolol &gt; pindolol. This is Alpha-2B adrenergic receptor (ADRA2B) from Homo sapiens (Human).